The following is a 320-amino-acid chain: Glutathione synthetase (320 aa).

The ATP-grasp domain occupies 127-312; sequence KLAITEFPRF…VAGLMIDALE (186 aa). 153–209 contributes to the ATP binding site; that stretch reads LAEHEDIILKPLDGMGGAGIFRIQNTDHNIGVIIETLTRYGTRTIMAQRFLPEIREG. Positions 283 and 285 each coordinate Mg(2+).

It belongs to the prokaryotic GSH synthase family. It depends on Mg(2+) as a cofactor. The cofactor is Mn(2+).

It carries out the reaction gamma-L-glutamyl-L-cysteine + glycine + ATP = glutathione + ADP + phosphate + H(+). It functions in the pathway sulfur metabolism; glutathione biosynthesis; glutathione from L-cysteine and L-glutamate: step 2/2. The sequence is that of Glutathione synthetase from Nitrosomonas europaea (strain ATCC 19718 / CIP 103999 / KCTC 2705 / NBRC 14298).